Here is a 258-residue protein sequence, read N- to C-terminus: 5'-nucleotidase SurE (258 aa).

A divalent metal cation-binding residues include aspartate 16, aspartate 17, serine 47, and asparagine 99.

This sequence belongs to the SurE nucleotidase family. It depends on a divalent metal cation as a cofactor.

It is found in the cytoplasm. It carries out the reaction a ribonucleoside 5'-phosphate + H2O = a ribonucleoside + phosphate. Functionally, nucleotidase that shows phosphatase activity on nucleoside 5'-monophosphates. The sequence is that of 5'-nucleotidase SurE from Coxiella burnetii (strain Dugway 5J108-111).